We begin with the raw amino-acid sequence, 234 residues long: Sugar fermentation stimulation protein A (234 aa).

Residues 201 to 220 (LLSEAQNKGVEVLAYKAELS) constitute a DNA-binding region (H-T-H motif).

It belongs to the SfsA family.

In terms of biological role, binds to DNA non-specifically. Could be a regulatory factor involved in maltose metabolism. The protein is Sugar fermentation stimulation protein A of Salmonella choleraesuis (strain SC-B67).